The chain runs to 194 residues: Xanthine phosphoribosyltransferase (194 aa).

The xanthine site is built by leucine 20 and asparagine 27. 128 to 132 (ANGQA) is a binding site for 5-phospho-alpha-D-ribose 1-diphosphate. Residue lysine 156 coordinates xanthine.

The protein belongs to the purine/pyrimidine phosphoribosyltransferase family. Xpt subfamily. Homodimer.

The protein resides in the cytoplasm. The catalysed reaction is XMP + diphosphate = xanthine + 5-phospho-alpha-D-ribose 1-diphosphate. It participates in purine metabolism; XMP biosynthesis via salvage pathway; XMP from xanthine: step 1/1. Its function is as follows. Converts the preformed base xanthine, a product of nucleic acid breakdown, to xanthosine 5'-monophosphate (XMP), so that it can be reused for RNA or DNA synthesis. This is Xanthine phosphoribosyltransferase (xpt) from Bacillus subtilis (strain 168).